Here is a 331-residue protein sequence, read N- to C-terminus: HTH-type transcriptional regulator RipA (331 aa).

One can recognise an HTH araC/xylS-type domain in the interval 112-209 (RAVAQVLVSN…GATPSTFTTG (98 aa)). DNA-binding regions (H-T-H motif) lie at residues 129–150 (EEFA…LKST) and 176–199 (ISVV…RRHT).

Functionally, under iron limitation, RipA negatively controls the expression of the acn (aconitase), catA (catechol 1,2 dioxygenase), leuCD (isopropylmalate dehydratase), narKGHJI (nitrite/nitrate transporter and nitrate reductase), sdhCAB (succinate dehydrogenase), pta (phosphotransacetylase) and katA (catalase) genes. Binds to the consensus sequence in the promoter region. The sequence is that of HTH-type transcriptional regulator RipA from Corynebacterium glutamicum (strain ATCC 13032 / DSM 20300 / JCM 1318 / BCRC 11384 / CCUG 27702 / LMG 3730 / NBRC 12168 / NCIMB 10025 / NRRL B-2784 / 534).